Here is a 116-residue protein sequence, read N- to C-terminus: Ribosome-binding factor A (116 aa).

It belongs to the RbfA family. In terms of assembly, monomer. Binds 30S ribosomal subunits, but not 50S ribosomal subunits or 70S ribosomes.

It localises to the cytoplasm. Its function is as follows. One of several proteins that assist in the late maturation steps of the functional core of the 30S ribosomal subunit. Associates with free 30S ribosomal subunits (but not with 30S subunits that are part of 70S ribosomes or polysomes). Required for efficient processing of 16S rRNA. May interact with the 5'-terminal helix region of 16S rRNA. The protein is Ribosome-binding factor A of Pediococcus pentosaceus (strain ATCC 25745 / CCUG 21536 / LMG 10740 / 183-1w).